The primary structure comprises 416 residues: Gamma-glutamyl phosphate reductase (416 aa).

Belongs to the gamma-glutamyl phosphate reductase family.

Its subcellular location is the cytoplasm. The catalysed reaction is L-glutamate 5-semialdehyde + phosphate + NADP(+) = L-glutamyl 5-phosphate + NADPH + H(+). It participates in amino-acid biosynthesis; L-proline biosynthesis; L-glutamate 5-semialdehyde from L-glutamate: step 2/2. Functionally, catalyzes the NADPH-dependent reduction of L-glutamate 5-phosphate into L-glutamate 5-semialdehyde and phosphate. The product spontaneously undergoes cyclization to form 1-pyrroline-5-carboxylate. This is Gamma-glutamyl phosphate reductase from Salmonella paratyphi C (strain RKS4594).